A 252-amino-acid polypeptide reads, in one-letter code: Ribosomal RNA small subunit methyltransferase J (252 aa).

S-adenosyl-L-methionine is bound by residues 101–102 (RD), 117–118 (ER), 153–154 (SS), and D171.

The protein belongs to the methyltransferase superfamily. RsmJ family.

The protein resides in the cytoplasm. The enzyme catalyses guanosine(1516) in 16S rRNA + S-adenosyl-L-methionine = N(2)-methylguanosine(1516) in 16S rRNA + S-adenosyl-L-homocysteine + H(+). In terms of biological role, specifically methylates the guanosine in position 1516 of 16S rRNA. This chain is Ribosomal RNA small subunit methyltransferase J, found in Salmonella paratyphi B (strain ATCC BAA-1250 / SPB7).